The primary structure comprises 183 residues: Translation initiation factor IF-3 (183 aa).

It belongs to the IF-3 family. In terms of assembly, monomer.

The protein localises to the cytoplasm. Functionally, IF-3 binds to the 30S ribosomal subunit and shifts the equilibrium between 70S ribosomes and their 50S and 30S subunits in favor of the free subunits, thus enhancing the availability of 30S subunits on which protein synthesis initiation begins. The sequence is that of Translation initiation factor IF-3 from Pseudomonas entomophila (strain L48).